We begin with the raw amino-acid sequence, 138 residues long: Translation initiation factor 2 subunit beta (138 aa).

This sequence belongs to the eIF-2-beta/eIF-5 family. Heterotrimer composed of an alpha, a beta and a gamma chain.

EIF-2 functions in the early steps of protein synthesis by forming a ternary complex with GTP and initiator tRNA. The sequence is that of Translation initiation factor 2 subunit beta from Methanococcus maripaludis (strain C5 / ATCC BAA-1333).